The primary structure comprises 221 residues: Stromal cell-derived factor 2-like protein 1 (221 aa).

Positions 1 to 28 (MWSAGSGRAAGPALLGILLALSLSGGRA) are cleaved as a signal peptide. 3 consecutive MIR domains span residues 33–87 (AGLV…IRGG), 95–150 (GSPV…VRCS), and 151–205 (GQHW…AMEG). Positions 218–221 (HDEL) match the Prevents secretion from ER motif.

The protein resides in the endoplasmic reticulum lumen. This chain is Stromal cell-derived factor 2-like protein 1 (SDF2L1), found in Bos taurus (Bovine).